A 346-amino-acid chain; its full sequence is tRNA N6-adenosine threonylcarbamoyltransferase (346 aa).

The Fe cation site is built by His-111 and His-115. Substrate-binding positions include 134–138 (LVSGG), Asp-167, Gly-180, Asp-184, and Asn-279. Asp-307 is a binding site for Fe cation.

Belongs to the KAE1 / TsaD family. Fe(2+) is required as a cofactor.

The protein resides in the cytoplasm. It catalyses the reaction L-threonylcarbamoyladenylate + adenosine(37) in tRNA = N(6)-L-threonylcarbamoyladenosine(37) in tRNA + AMP + H(+). Functionally, required for the formation of a threonylcarbamoyl group on adenosine at position 37 (t(6)A37) in tRNAs that read codons beginning with adenine. Is involved in the transfer of the threonylcarbamoyl moiety of threonylcarbamoyl-AMP (TC-AMP) to the N6 group of A37, together with TsaE and TsaB. TsaD likely plays a direct catalytic role in this reaction. The sequence is that of tRNA N6-adenosine threonylcarbamoyltransferase from Trichormus variabilis (strain ATCC 29413 / PCC 7937) (Anabaena variabilis).